A 174-amino-acid chain; its full sequence is Flavodoxin (174 aa).

Residues Ile-4–Lys-166 enclose the Flavodoxin-like domain.

The protein belongs to the flavodoxin family. Requires FMN as cofactor.

In terms of biological role, low-potential electron donor to a number of redox enzymes. In Buchnera aphidicola subsp. Baizongia pistaciae (strain Bp), this protein is Flavodoxin (fldA).